Reading from the N-terminus, the 310-residue chain is Porphobilinogen deaminase (310 aa).

Cys-243 carries the post-translational modification S-(dipyrrolylmethanemethyl)cysteine.

Belongs to the HMBS family. As to quaternary structure, monomer. Dipyrromethane serves as cofactor.

The enzyme catalyses 4 porphobilinogen + H2O = hydroxymethylbilane + 4 NH4(+). The protein operates within porphyrin-containing compound metabolism; protoporphyrin-IX biosynthesis; coproporphyrinogen-III from 5-aminolevulinate: step 2/4. Tetrapolymerization of the monopyrrole PBG into the hydroxymethylbilane pre-uroporphyrinogen in several discrete steps. This chain is Porphobilinogen deaminase, found in Mannheimia succiniciproducens (strain KCTC 0769BP / MBEL55E).